Reading from the N-terminus, the 190-residue chain is MSGLRPALSTFLFLLLITGGVYPLLTTALGQWWFPWQANGSLIREGDTVRGSALIGQNFTGNGYFHGRPSATAEMPYNPQASGGSNLAVSNPELDKLIAARVAALRAANPDASASVPVELVTASASGLDNNITPQAAAWQIPRVAKARNLSVEQLTQLIAKYSQQPLVNYIGQPVVNIVELNLALDKLDE.

A helical membrane pass occupies residues 10-30 (TFLFLLLITGGVYPLLTTALG).

It belongs to the KdpC family. As to quaternary structure, the system is composed of three essential subunits: KdpA, KdpB and KdpC.

It localises to the cell inner membrane. Functionally, part of the high-affinity ATP-driven potassium transport (or Kdp) system, which catalyzes the hydrolysis of ATP coupled with the electrogenic transport of potassium into the cytoplasm. This subunit acts as a catalytic chaperone that increases the ATP-binding affinity of the ATP-hydrolyzing subunit KdpB by the formation of a transient KdpB/KdpC/ATP ternary complex. The chain is Potassium-transporting ATPase KdpC subunit from Escherichia coli (strain SMS-3-5 / SECEC).